The following is a 426-amino-acid chain: Glucose-6-phosphate isomerase (426 aa).

Residue Glu-282 is the Proton donor of the active site. Active-site residues include His-303 and Lys-417.

The protein belongs to the GPI family.

The protein resides in the cytoplasm. The enzyme catalyses alpha-D-glucose 6-phosphate = beta-D-fructose 6-phosphate. It functions in the pathway carbohydrate biosynthesis; gluconeogenesis. The protein operates within carbohydrate degradation; glycolysis; D-glyceraldehyde 3-phosphate and glycerone phosphate from D-glucose: step 2/4. Functionally, catalyzes the reversible isomerization of glucose-6-phosphate to fructose-6-phosphate. The chain is Glucose-6-phosphate isomerase from Aster yellows witches'-broom phytoplasma (strain AYWB).